The sequence spans 696 residues: Glycine--tRNA ligase beta subunit (696 aa).

It belongs to the class-II aminoacyl-tRNA synthetase family. As to quaternary structure, tetramer of two alpha and two beta subunits.

It localises to the cytoplasm. It carries out the reaction tRNA(Gly) + glycine + ATP = glycyl-tRNA(Gly) + AMP + diphosphate. The chain is Glycine--tRNA ligase beta subunit from Methylorubrum extorquens (strain CM4 / NCIMB 13688) (Methylobacterium extorquens).